Consider the following 422-residue polypeptide: Ribonuclease Y (422 aa).

The 61-residue stretch at 112–172 folds into the KH domain; sequence TTNIVKLPSD…IRREIATRTL (61 aa). In terms of domain architecture, HD spans 238–331; sequence VLAHSIEVAK…VAIADSISAS (94 aa).

It belongs to the RNase Y family.

In terms of biological role, endoribonuclease that initiates mRNA decay. This chain is Ribonuclease Y, found in Mycoplasma mycoides.